The sequence spans 348 residues: Glucan endo-1,3-beta-glucosidase, basic isoform (348 aa).

Pyrrolidone carboxylic acid is present on Gln1. Residue Glu95 is the Proton donor of the active site. The Nucleophile role is filled by Glu240. A propeptide spans 317-348 (AQRMQRLLLMSSMQHIPLRVTCKLEPSSQSLL) (removed in mature form).

The protein belongs to the glycosyl hydrolase 17 family.

The protein localises to the vacuole. The catalysed reaction is Hydrolysis of (1-&gt;3)-beta-D-glucosidic linkages in (1-&gt;3)-beta-D-glucans.. Its function is as follows. Implicated in the defense of plants against pathogens. This is Glucan endo-1,3-beta-glucosidase, basic isoform from Phaseolus vulgaris (Kidney bean).